Consider the following 331-residue polypeptide: Mucin-15 (331 aa).

A signal peptide spans 1 to 22; it reads MLTLAKIALISSLFISLPFARP. Topologically, residues 23–233 are extracellular; sequence QKQNPRRNVT…SDTPKENKNT (211 aa). Asn30, Asn44, Asn54, Asn59, Asn75, Asn84, Asn120, Asn136, Asn145, Asn152, Asn215, and Asn222 each carry an N-linked (GlcNAc...) asparagine glycan. Over residues 124 to 162 the composition is skewed to polar residues; that stretch reads ADANPLQVSEHSNSTNSPSPENFTWSLDNDTMNSPEDIS. The disordered stretch occupies residues 124–186; it reads ADANPLQVSE…VTPFTAEPTE (63 aa). A helical membrane pass occupies residues 234–254; the sequence is GIVFGAILGAILGASLLSLVG. Topologically, residues 255–331 are cytoplasmic; sequence YLLCGQRKTD…DAIPPLRPSI (77 aa). The segment at 302 to 331 is disordered; it reads AVSDSSMPEGGESLQDGIPMDAIPPLRPSI.

Highly glycosylated (N- and O-linked carbohydrates).

Its subcellular location is the membrane. The sequence is that of Mucin-15 (Muc15) from Mus musculus (Mouse).